Reading from the N-terminus, the 165-residue chain is Large ribosomal subunit protein uL10 (165 aa).

The protein belongs to the universal ribosomal protein uL10 family. In terms of assembly, part of the ribosomal stalk of the 50S ribosomal subunit. The N-terminus interacts with L11 and the large rRNA to form the base of the stalk. The C-terminus forms an elongated spine to which L12 dimers bind in a sequential fashion forming a multimeric L10(L12)X complex.

Forms part of the ribosomal stalk, playing a central role in the interaction of the ribosome with GTP-bound translation factors. The protein is Large ribosomal subunit protein uL10 of Burkholderia mallei (strain NCTC 10229).